The sequence spans 390 residues: 5-hydroxytryptamine receptor 1B (390 aa).

The Extracellular portion of the chain corresponds to 1-46; that stretch reads MEEPGAQCAPPLAAGSQIAVPQANLSAAHSHNCSAEGYIYQDSIAL. Residues N24 and N32 are each glycosylated (N-linked (GlcNAc...) asparagine). The chain crosses the membrane as a helical span at residues 47–72; that stretch reads PWKVLLVLLLALFTLATTLSNAFVVA. At 73–86 the chain is on the cytoplasmic side; it reads TVYRTRKLHTPANY. The helical transmembrane segment at 87–111 threads the bilayer; the sequence is LIASLAVTDLLVSILVMPISTMYTV. The Extracellular segment spans residues 112 to 119; the sequence is TGRWTLGQ. The helical transmembrane segment at 120–145 threads the bilayer; sequence VVCDLWLSSDITCCTASIMHLCVIAL. C122 and C199 form a disulfide bridge. Positions 129 and 134 each coordinate ergotamine. Positions 146-148 match the DRY motif; important for ligand-induced conformation changes and signaling motif; that stretch reads DRY. Over 146-165 the chain is Cytoplasmic; it reads DRYWAITDAVEYSAKRTPKR. The helical transmembrane segment at 166 to 184 threads the bilayer; the sequence is AAIMIRLVWVFSICISLPP. The Extracellular portion of the chain corresponds to 185–205; it reads FFWRQAKAEEEVSECLVNTDH. Residue V201 participates in ergotamine binding. The chain crosses the membrane as a helical span at residues 206-229; that stretch reads VLYTVYSTVGAFYLPTLLLIALYG. Topologically, residues 230–315 are cytoplasmic; sequence RIYVEARSRI…AARERKATKT (86 aa). Residues 260 to 272 are compositionally biased toward polar residues; it reads SPGSTTSVTSINS. A disordered region spans residues 260-282; that stretch reads SPGSTTSVTSINSRAPDVPSESG. Residues 316–337 form a helical membrane-spanning segment; sequence LGIILGVFIVCWLPFFIISLVM. The Extracellular segment spans residues 338-347; it reads PICKDACWFH. A helical membrane pass occupies residues 348–370; that stretch reads QAIFDFFTWLGYVNSLINPIIYT. Positions 365 to 369 match the NPxxY motif; important for ligand-induced conformation changes and signaling motif; sequence NPIIY. At 371–390 the chain is on the cytoplasmic side; that stretch reads MSNEDFKQAFHKLIRFKCTS. C388 carries S-palmitoyl cysteine lipidation.

The protein belongs to the G-protein coupled receptor 1 family. As to quaternary structure, homodimer. Heterodimer with HTR1D. Phosphorylated. Desensitization of the receptor may be mediated by its phosphorylation. Post-translationally, palmitoylated.

The protein localises to the cell membrane. In terms of biological role, G-protein coupled receptor for 5-hydroxytryptamine (serotonin). Also functions as a receptor for ergot alkaloid derivatives, various anxiolytic and antidepressant drugs and other psychoactive substances, such as lysergic acid diethylamide (LSD). Ligand binding causes a conformation change that triggers signaling via guanine nucleotide-binding proteins (G proteins) and modulates the activity of downstream effectors, such as adenylate cyclase. HTR1B is coupled to G(i)/G(o) G alpha proteins and mediates inhibitory neurotransmission by inhibiting adenylate cyclase activity. Arrestin family members inhibit signaling via G proteins and mediate activation of alternative signaling pathways. Regulates the release of 5-hydroxytryptamine, dopamine and acetylcholine in the brain, and thereby affects neural activity, nociceptive processing, pain perception, mood and behavior. Besides, plays a role in vasoconstriction of cerebral arteries. This is 5-hydroxytryptamine receptor 1B (HTR1B) from Oryctolagus cuniculus (Rabbit).